A 2067-amino-acid polypeptide reads, in one-letter code: Lipoxygenase homology domain-containing protein 1 (2067 aa).

PLAT domains follow at residues 43–160 (RVYE…RDLL), 172–287 (NKYE…RDIL), 296–412 (ITYI…RQLY), 425–540 (FPWS…REMT), 553–673 (ARYH…RELL), 684–803 (FRYH…VELY), 814–934 (VHYE…RELL), 969–1087 (TTFS…RDLF), 1100–1225 (VPYE…RELV), 1254–1372 (VLYS…RLFY), 1421–1539 (IPYY…RVFD), 1552–1667 (VLYE…CEMC), 1679–1797 (TSYT…RDFA), 1810–1931 (TTYE…VFEV), and 1948–2064 (VKYE…RDLF).

Its subcellular location is the cell projection. It is found in the stereocilium. Involved in hearing. Required for normal function of hair cells in the inner ear. This is Lipoxygenase homology domain-containing protein 1 (LOXHD1) from Homo sapiens (Human).